The following is a 123-amino-acid chain: MIQEQTMLNVADNSGARRVMCIKVLGGSHRRYAGVGDIIKITIKEAIPRGKVKKGDVLKAVVVRTKKGVRRPDGSVIRFDGNACVLLNNNSEQPIGTRIFGPVTRELRSEKFMKIISLAPEVL.

This sequence belongs to the universal ribosomal protein uL14 family. In terms of assembly, part of the 50S ribosomal subunit. Forms a cluster with proteins L3 and L19. In the 70S ribosome, L14 and L19 interact and together make contacts with the 16S rRNA in bridges B5 and B8.

Functionally, binds to 23S rRNA. Forms part of two intersubunit bridges in the 70S ribosome. In Escherichia coli O139:H28 (strain E24377A / ETEC), this protein is Large ribosomal subunit protein uL14.